A 600-amino-acid chain; its full sequence is Sulfite reductase [NADPH] flavoprotein alpha-component (600 aa).

One can recognise a Flavodoxin-like domain in the interval Ile-63 to Thr-201. FMN is bound by residues Ser-69–Ala-74, Ser-116–Gly-119, and Leu-152–Cys-161. The FAD-binding FR-type domain maps to Gln-235–Pro-449. FAD-binding positions include Thr-323, His-357, Arg-387–Ser-390, Thr-405–Gly-407, Tyr-411, and Gly-420–Ser-423. NADP(+)-binding positions include Ser-520–Arg-521, Lys-526–Gln-530, and Asp-562. Tyr-600 provides a ligand contact to FAD.

Belongs to the NADPH-dependent sulphite reductase flavoprotein subunit CysJ family. It in the N-terminal section; belongs to the flavodoxin family. This sequence in the C-terminal section; belongs to the flavoprotein pyridine nucleotide cytochrome reductase family. In terms of assembly, alpha(8)-beta(8). The alpha component is a flavoprotein, the beta component is a hemoprotein. It depends on FAD as a cofactor. FMN is required as a cofactor.

It carries out the reaction hydrogen sulfide + 3 NADP(+) + 3 H2O = sulfite + 3 NADPH + 4 H(+). Its pathway is sulfur metabolism; hydrogen sulfide biosynthesis; hydrogen sulfide from sulfite (NADPH route): step 1/1. Functionally, component of the sulfite reductase complex that catalyzes the 6-electron reduction of sulfite to sulfide. This is one of several activities required for the biosynthesis of L-cysteine from sulfate. The flavoprotein component catalyzes the electron flow from NADPH -&gt; FAD -&gt; FMN to the hemoprotein component. The chain is Sulfite reductase [NADPH] flavoprotein alpha-component from Photorhabdus laumondii subsp. laumondii (strain DSM 15139 / CIP 105565 / TT01) (Photorhabdus luminescens subsp. laumondii).